Consider the following 447-residue polypeptide: Trigger factor (447 aa).

The region spanning 159-244 (GDMLLMQVES…VREIKEEKLP (86 aa)) is the PPIase FKBP-type domain.

Belongs to the FKBP-type PPIase family. Tig subfamily.

It is found in the cytoplasm. It catalyses the reaction [protein]-peptidylproline (omega=180) = [protein]-peptidylproline (omega=0). In terms of biological role, involved in protein export. Acts as a chaperone by maintaining the newly synthesized protein in an open conformation. Functions as a peptidyl-prolyl cis-trans isomerase. The polypeptide is Trigger factor (Dehalococcoides mccartyi (strain CBDB1)).